The following is a 399-amino-acid chain: Elongation factor Tu (399 aa).

In terms of domain architecture, tr-type G spans 10–207 (KPHLNIGTIG…AVDNYVPEPQ (198 aa)). Residues 19–26 (GHIDHGKT) form a G1 region. 19-26 (GHIDHGKT) serves as a coordination point for GTP. Residue T26 participates in Mg(2+) binding. A G2 region spans residues 60-64 (GITIN). The segment at 81–84 (DCPG) is G3. Residues 81-85 (DCPGH) and 136-139 (NKVD) contribute to the GTP site. Residues 136–139 (NKVD) form a G4 region. A G5 region spans residues 174–176 (SAL).

Belongs to the TRAFAC class translation factor GTPase superfamily. Classic translation factor GTPase family. EF-Tu/EF-1A subfamily. Monomer.

Its subcellular location is the cytoplasm. It catalyses the reaction GTP + H2O = GDP + phosphate + H(+). Its function is as follows. GTP hydrolase that promotes the GTP-dependent binding of aminoacyl-tRNA to the A-site of ribosomes during protein biosynthesis. This chain is Elongation factor Tu, found in Kosmotoga olearia (strain ATCC BAA-1733 / DSM 21960 / TBF 19.5.1).